The sequence spans 510 residues: Probable cytosol aminopeptidase (510 aa).

Mn(2+)-binding residues include K268 and D273. K280 is an active-site residue. Residues D291, D350, and E352 each coordinate Mn(2+). Residue R354 is part of the active site.

It belongs to the peptidase M17 family. The cofactor is Mn(2+).

The protein localises to the cytoplasm. The catalysed reaction is Release of an N-terminal amino acid, Xaa-|-Yaa-, in which Xaa is preferably Leu, but may be other amino acids including Pro although not Arg or Lys, and Yaa may be Pro. Amino acid amides and methyl esters are also readily hydrolyzed, but rates on arylamides are exceedingly low.. The enzyme catalyses Release of an N-terminal amino acid, preferentially leucine, but not glutamic or aspartic acids.. Its function is as follows. Presumably involved in the processing and regular turnover of intracellular proteins. Catalyzes the removal of unsubstituted N-terminal amino acids from various peptides. This is Probable cytosol aminopeptidase from Micrococcus luteus (strain ATCC 4698 / DSM 20030 / JCM 1464 / CCM 169 / CCUG 5858 / IAM 1056 / NBRC 3333 / NCIMB 9278 / NCTC 2665 / VKM Ac-2230) (Micrococcus lysodeikticus).